A 441-amino-acid chain; its full sequence is tRNA modification GTPase MnmE (441 aa).

R23, E81, and R121 together coordinate (6S)-5-formyl-5,6,7,8-tetrahydrofolate. One can recognise a TrmE-type G domain in the interval 219 to 366; sequence GFTVVLAGAP…LLDAIQAAAE (148 aa). GTP contacts are provided by residues 229–234, 248–254, and 273–276; these read NSGKST, SDSPGTT, and DTAG. Mg(2+) contacts are provided by S233 and T254. A (6S)-5-formyl-5,6,7,8-tetrahydrofolate-binding site is contributed by K441.

This sequence belongs to the TRAFAC class TrmE-Era-EngA-EngB-Septin-like GTPase superfamily. TrmE GTPase family. As to quaternary structure, homodimer. Heterotetramer of two MnmE and two MnmG subunits. The cofactor is K(+).

It is found in the cytoplasm. Its function is as follows. Exhibits a very high intrinsic GTPase hydrolysis rate. Involved in the addition of a carboxymethylaminomethyl (cmnm) group at the wobble position (U34) of certain tRNAs, forming tRNA-cmnm(5)s(2)U34. This is tRNA modification GTPase MnmE from Methylobacterium radiotolerans (strain ATCC 27329 / DSM 1819 / JCM 2831 / NBRC 15690 / NCIMB 10815 / 0-1).